Here is a 267-residue protein sequence, read N- to C-terminus: tRNA pseudouridine synthase A (267 aa).

Aspartate 51 functions as the Nucleophile in the catalytic mechanism. Tyrosine 109 contributes to the substrate binding site.

Belongs to the tRNA pseudouridine synthase TruA family. In terms of assembly, homodimer.

The catalysed reaction is uridine(38/39/40) in tRNA = pseudouridine(38/39/40) in tRNA. Its function is as follows. Formation of pseudouridine at positions 38, 39 and 40 in the anticodon stem and loop of transfer RNAs. The protein is tRNA pseudouridine synthase A of Staphylococcus carnosus (strain TM300).